Consider the following 738-residue polypeptide: Polyphosphate kinase (738 aa).

The segment at 1-48 (MIGNDRWVTEIETGPVTEARPDTNAREPGDRTPAAPPAATPAATTDQL) is disordered. A compositionally biased stretch (basic and acidic residues) spans 19–30 (ARPDTNAREPGD). N91 is a binding site for ATP. The Mg(2+) site is built by R427 and R457. Catalysis depends on H487, which acts as the Phosphohistidine intermediate. ATP is bound by residues Y520, R620, and H648.

This sequence belongs to the polyphosphate kinase 1 (PPK1) family. Mg(2+) is required as a cofactor. An intermediate of this reaction is the autophosphorylated ppk in which a phosphate is covalently linked to a histidine residue through a N-P bond.

The catalysed reaction is [phosphate](n) + ATP = [phosphate](n+1) + ADP. Its function is as follows. Catalyzes the reversible transfer of the terminal phosphate of ATP to form a long-chain polyphosphate (polyP). The sequence is that of Polyphosphate kinase from Mycobacterium marinum (strain ATCC BAA-535 / M).